Consider the following 189-residue polypeptide: Large ribosomal subunit protein uL6 (189 aa).

It belongs to the universal ribosomal protein uL6 family. In terms of assembly, part of the 50S ribosomal subunit.

This protein binds to the 23S rRNA, and is important in its secondary structure. It is located near the subunit interface in the base of the L7/L12 stalk, and near the tRNA binding site of the peptidyltransferase center. This chain is Large ribosomal subunit protein uL6, found in Microcystis aeruginosa (strain NIES-843 / IAM M-2473).